Here is a 285-residue protein sequence, read N- to C-terminus: Extracellular metalloprotease NCU07200 (285 aa).

An N-terminal signal peptide occupies residues 1–18 (MQIKSFLLAAAAAPAALG). His-197 serves as a coordination point for Zn(2+). Glu-198 is an active-site residue. His-201 is a Zn(2+) binding site. An intrachain disulfide couples Cys-233 to Cys-260. Asn-282 carries N-linked (GlcNAc...) asparagine glycosylation.

The protein belongs to the peptidase M43B family.

The protein localises to the secreted. Functionally, secreted metalloproteinase that allows assimilation of proteinaceous substrates. The protein is Extracellular metalloprotease NCU07200 of Neurospora crassa (strain ATCC 24698 / 74-OR23-1A / CBS 708.71 / DSM 1257 / FGSC 987).